We begin with the raw amino-acid sequence, 155 residues long: Small ribosomal subunit protein uS7c (155 aa).

It belongs to the universal ribosomal protein uS7 family. As to quaternary structure, part of the 30S ribosomal subunit.

It localises to the plastid. The protein resides in the chloroplast. One of the primary rRNA binding proteins, it binds directly to 16S rRNA where it nucleates assembly of the head domain of the 30S subunit. The chain is Small ribosomal subunit protein uS7c (rps7) from Coelogyne cristata (Orchid).